We begin with the raw amino-acid sequence, 162 residues long: Single-stranded DNA-binding protein 1 (162 aa).

The region spanning 5-110 is the SSB domain; that stretch reads LNKVMLIGHL…IVCTDMQMLG (106 aa). The segment at 110–162 is disordered; it reads GAKDSGGGTSDASYSQNRPSYSRPSRPEPSSGNYGASPSSGGAQEFEKDDLPF. A compositionally biased stretch (low complexity) spans 122 to 140; the sequence is SYSQNRPSYSRPSRPEPSS. A compositionally biased stretch (polar residues) spans 141-151; that stretch reads GNYGASPSSGG.

Homotetramer.

This chain is Single-stranded DNA-binding protein 1 (ssb1), found in Chlorobaculum tepidum (strain ATCC 49652 / DSM 12025 / NBRC 103806 / TLS) (Chlorobium tepidum).